The primary structure comprises 124 residues: Apolipoprotein C-IV (124 aa).

An N-terminal signal peptide occupies residues 1-27; it reads MSLLRCRPRDLPSVSLSVLFLVSFVAS. N-linked (GlcNAc...) asparagine glycosylation occurs at asparagine 107.

Belongs to the apolipoprotein C4 family. Expressed by the liver and secreted in plasma.

The protein resides in the secreted. Functionally, may participate in lipoprotein metabolism. This is Apolipoprotein C-IV (Apoc4) from Mus musculus (Mouse).